A 311-amino-acid polypeptide reads, in one-letter code: Probable manganese-dependent inorganic pyrophosphatase (311 aa).

Positions 9, 13, 15, 77, 99, and 151 each coordinate Mn(2+).

Belongs to the PPase class C family. Mn(2+) serves as cofactor.

The protein localises to the cytoplasm. The catalysed reaction is diphosphate + H2O = 2 phosphate + H(+). The polypeptide is Probable manganese-dependent inorganic pyrophosphatase (Streptococcus equi subsp. zooepidemicus (strain MGCS10565)).